Here is an 865-residue protein sequence, read N- to C-terminus: Protein translocase subunit SecA (865 aa).

ATP contacts are provided by residues Gln-85, 103 to 107 (GEGKT), and Asp-505. Positions 847, 849, 858, and 859 each coordinate Zn(2+).

This sequence belongs to the SecA family. Monomer and homodimer. Part of the essential Sec protein translocation apparatus which comprises SecA, SecYEG and auxiliary proteins SecDF. Other proteins may also be involved. Zn(2+) serves as cofactor.

It is found in the cell membrane. The protein resides in the cytoplasm. It carries out the reaction ATP + H2O + cellular proteinSide 1 = ADP + phosphate + cellular proteinSide 2.. In terms of biological role, part of the Sec protein translocase complex. Interacts with the SecYEG preprotein conducting channel. Has a central role in coupling the hydrolysis of ATP to the transfer of proteins into and across the cell membrane, serving as an ATP-driven molecular motor driving the stepwise translocation of polypeptide chains across the membrane. This Lactococcus lactis subsp. cremoris (strain SK11) protein is Protein translocase subunit SecA.